The sequence spans 311 residues: Aspartate carbamoyltransferase catalytic subunit (311 aa).

Residues Arg55 and Thr56 each coordinate carbamoyl phosphate. Lys85 contacts L-aspartate. Positions 106, 135, and 138 each coordinate carbamoyl phosphate. L-aspartate contacts are provided by Arg168 and Arg230. Positions 268 and 269 each coordinate carbamoyl phosphate.

Belongs to the aspartate/ornithine carbamoyltransferase superfamily. ATCase family. As to quaternary structure, heterododecamer (2C3:3R2) of six catalytic PyrB chains organized as two trimers (C3), and six regulatory PyrI chains organized as three dimers (R2).

It carries out the reaction carbamoyl phosphate + L-aspartate = N-carbamoyl-L-aspartate + phosphate + H(+). The protein operates within pyrimidine metabolism; UMP biosynthesis via de novo pathway; (S)-dihydroorotate from bicarbonate: step 2/3. Its function is as follows. Catalyzes the condensation of carbamoyl phosphate and aspartate to form carbamoyl aspartate and inorganic phosphate, the committed step in the de novo pyrimidine nucleotide biosynthesis pathway. The protein is Aspartate carbamoyltransferase catalytic subunit of Klebsiella pneumoniae (strain 342).